The following is a 163-amino-acid chain: Peptide methionine sulfoxide reductase MsrA (163 aa).

Cysteine 10 is an active-site residue.

This sequence belongs to the MsrA Met sulfoxide reductase family.

The enzyme catalyses L-methionyl-[protein] + [thioredoxin]-disulfide + H2O = L-methionyl-(S)-S-oxide-[protein] + [thioredoxin]-dithiol. It catalyses the reaction [thioredoxin]-disulfide + L-methionine + H2O = L-methionine (S)-S-oxide + [thioredoxin]-dithiol. In terms of biological role, has an important function as a repair enzyme for proteins that have been inactivated by oxidation. Catalyzes the reversible oxidation-reduction of methionine sulfoxide in proteins to methionine. The protein is Peptide methionine sulfoxide reductase MsrA of Vesicomyosocius okutanii subsp. Calyptogena okutanii (strain HA).